A 312-amino-acid polypeptide reads, in one-letter code: tRNA dimethylallyltransferase (312 aa).

Residue 10–17 (GPTGVGKT) participates in ATP binding. 12–17 (TGVGKT) contributes to the substrate binding site.

Belongs to the IPP transferase family. As to quaternary structure, monomer. It depends on Mg(2+) as a cofactor.

It carries out the reaction adenosine(37) in tRNA + dimethylallyl diphosphate = N(6)-dimethylallyladenosine(37) in tRNA + diphosphate. Its function is as follows. Catalyzes the transfer of a dimethylallyl group onto the adenine at position 37 in tRNAs that read codons beginning with uridine, leading to the formation of N6-(dimethylallyl)adenosine (i(6)A). This chain is tRNA dimethylallyltransferase, found in Coprothermobacter proteolyticus (strain ATCC 35245 / DSM 5265 / OCM 4 / BT).